We begin with the raw amino-acid sequence, 493 residues long: Transmembrane and coiled-coil domain-containing protein 6 (493 aa).

A coiled-coil region spans residues 15–84; it reads GVEELRRRRR…QRGTEEKERE (70 aa). A run of 2 helical transmembrane segments spans residues 338–358 and 386–406; these read VVAA…SLLP and PLLQ…TVLC.

It localises to the membrane. This Homo sapiens (Human) protein is Transmembrane and coiled-coil domain-containing protein 6 (TMCO6).